The following is a 159-amino-acid chain: Cell number regulator 4 (159 aa).

A helical membrane pass occupies residues Leu-52–Tyr-74.

It belongs to the cornifelin family. As to expression, expressed in roots, coleoptiles, leaves, stalks, apical meristems, immature ears, endosperm, pericarp and tassel spikelets.

Its subcellular location is the membrane. The polypeptide is Cell number regulator 4 (CNR4) (Zea mays (Maize)).